The sequence spans 396 residues: Anhydro-N-acetylmuramic acid kinase (396 aa).

21-28 (GTSADGID) provides a ligand contact to ATP.

The protein belongs to the anhydro-N-acetylmuramic acid kinase family.

It catalyses the reaction 1,6-anhydro-N-acetyl-beta-muramate + ATP + H2O = N-acetyl-D-muramate 6-phosphate + ADP + H(+). It participates in amino-sugar metabolism; 1,6-anhydro-N-acetylmuramate degradation. The protein operates within cell wall biogenesis; peptidoglycan recycling. Catalyzes the specific phosphorylation of 1,6-anhydro-N-acetylmuramic acid (anhMurNAc) with the simultaneous cleavage of the 1,6-anhydro ring, generating MurNAc-6-P. Is required for the utilization of anhMurNAc either imported from the medium or derived from its own cell wall murein, and thus plays a role in cell wall recycling. The protein is Anhydro-N-acetylmuramic acid kinase of Caldanaerobacter subterraneus subsp. tengcongensis (strain DSM 15242 / JCM 11007 / NBRC 100824 / MB4) (Thermoanaerobacter tengcongensis).